Reading from the N-terminus, the 1143-residue chain is cGMP-specific 3',5'-cyclic phosphodiesterase (1143 aa).

2 stretches are compositionally biased toward low complexity: residues 1–19 and 31–45; these read MHGPVSRSSSSSNMTDVSS and TTSSSSAATTSASSS. Positions 1–167 are disordered; the sequence is MHGPVSRSSS…KASTTASQQD (167 aa). The segment covering 46–59 has biased composition (polar residues); the sequence is KPLTNGANKTTIST. Low complexity predominate over residues 75–84; that stretch reads GAIPASSSSG. The span at 96-107 shows a compositional bias: polar residues; it reads SNNNRPAATNRS. Positions 131–153 are enriched in low complexity; it reads SSSSPSQSPSQTQASIQTQTSQQ. GAF domains follow at residues 272 to 424 and 456 to 637; these read DIDV…GIGI and NLEC…GLGI. The PDEase domain maps to 667–990; that stretch reads SQDQTEKLTQ…RNWQDLAEKV (324 aa). Catalysis depends on histidine 743, which acts as the Proton donor. Residues histidine 747, histidine 783, aspartate 784, and aspartate 894 each coordinate a divalent metal cation. 2 disordered regions span residues 1031–1060 and 1090–1143; these read QQSQHGSEDSHTPEHQRSGSRLSMKKTGAL and SHVS…CALL. 2 stretches are compositionally biased toward basic and acidic residues: residues 1036 to 1047 and 1090 to 1100; these read GSEDSHTPEHQR and SHVSEDMDDKS. The segment covering 1109-1127 has biased composition (low complexity); that stretch reads ASGSMGRMSASSSTSSTGG. Over residues 1133 to 1143 the composition is skewed to basic residues; the sequence is SKKRSKLCALL. A Cysteine methyl ester modification is found at cysteine 1140. Cysteine 1140 carries the S-farnesyl cysteine lipid modification. The propeptide at 1141–1143 is removed in mature form; the sequence is ALL.

This sequence belongs to the cyclic nucleotide phosphodiesterase family. As to quaternary structure, interacts with PrBP. A divalent metal cation is required as a cofactor.

The protein resides in the cell membrane. The catalysed reaction is 3',5'-cyclic GMP + H2O = GMP + H(+). Functionally, has a role regulating cGMP transport in Malpighian tubule principal cells. This is cGMP-specific 3',5'-cyclic phosphodiesterase from Drosophila simulans (Fruit fly).